A 355-amino-acid polypeptide reads, in one-letter code: tRNA uridine(34) hydroxylase (355 aa).

One can recognise a Rhodanese domain in the interval 146-240; that stretch reads DDPDTLFVDM…YARKAKEQGL (95 aa). Catalysis depends on Cys200, which acts as the Cysteine persulfide intermediate. A disordered region spans residues 333–355; the sequence is NKSKGLLQATMHIPSPEKSADEK.

This sequence belongs to the TrhO family.

It carries out the reaction uridine(34) in tRNA + AH2 + O2 = 5-hydroxyuridine(34) in tRNA + A + H2O. In terms of biological role, catalyzes oxygen-dependent 5-hydroxyuridine (ho5U) modification at position 34 in tRNAs. This chain is tRNA uridine(34) hydroxylase, found in Yersinia pseudotuberculosis serotype O:1b (strain IP 31758).